Consider the following 81-residue polypeptide: Cytochrome b559 subunit alpha (81 aa).

The helical transmembrane segment at 21–35 threads the bilayer; sequence VIHSITIPMLFIAGW. A heme-binding site is contributed by H23.

The protein belongs to the PsbE/PsbF family. In terms of assembly, heterodimer of an alpha subunit and a beta subunit. PSII is composed of 1 copy each of membrane proteins PsbA, PsbB, PsbC, PsbD, PsbE, PsbF, PsbH, PsbI, PsbJ, PsbK, PsbL, PsbM, PsbT, PsbX, PsbY, PsbZ, Psb30/Ycf12, peripheral proteins PsbO, CyanoQ (PsbQ), PsbU, PsbV and a large number of cofactors. It forms dimeric complexes. Heme b is required as a cofactor.

Its subcellular location is the cellular thylakoid membrane. Functionally, this b-type cytochrome is tightly associated with the reaction center of photosystem II (PSII). PSII is a light-driven water:plastoquinone oxidoreductase that uses light energy to abstract electrons from H(2)O, generating O(2) and a proton gradient subsequently used for ATP formation. It consists of a core antenna complex that captures photons, and an electron transfer chain that converts photonic excitation into a charge separation. This chain is Cytochrome b559 subunit alpha, found in Rippkaea orientalis (strain PCC 8801 / RF-1) (Cyanothece sp. (strain PCC 8801)).